The primary structure comprises 553 residues: Dihydroxy-acid dehydratase 1 (553 aa).

Aspartate 78 is a Mg(2+) binding site. Cysteine 119 is a [2Fe-2S] cluster binding site. Residues aspartate 120 and lysine 121 each coordinate Mg(2+). At lysine 121 the chain carries N6-carboxylysine. Cysteine 191 is a [2Fe-2S] cluster binding site. Glutamate 444 serves as a coordination point for Mg(2+). Serine 470 serves as the catalytic Proton acceptor.

This sequence belongs to the IlvD/Edd family. In terms of assembly, homodimer. [2Fe-2S] cluster serves as cofactor. The cofactor is Mg(2+).

The enzyme catalyses (2R)-2,3-dihydroxy-3-methylbutanoate = 3-methyl-2-oxobutanoate + H2O. The catalysed reaction is (2R,3R)-2,3-dihydroxy-3-methylpentanoate = (S)-3-methyl-2-oxopentanoate + H2O. It functions in the pathway amino-acid biosynthesis; L-isoleucine biosynthesis; L-isoleucine from 2-oxobutanoate: step 3/4. The protein operates within amino-acid biosynthesis; L-valine biosynthesis; L-valine from pyruvate: step 3/4. In terms of biological role, functions in the biosynthesis of branched-chain amino acids. Catalyzes the dehydration of (2R,3R)-2,3-dihydroxy-3-methylpentanoate (2,3-dihydroxy-3-methylvalerate) into 2-oxo-3-methylpentanoate (2-oxo-3-methylvalerate) and of (2R)-2,3-dihydroxy-3-methylbutanoate (2,3-dihydroxyisovalerate) into 2-oxo-3-methylbutanoate (2-oxoisovalerate), the penultimate precursor to L-isoleucine and L-valine, respectively. This is Dihydroxy-acid dehydratase 1 from Methanosarcina acetivorans (strain ATCC 35395 / DSM 2834 / JCM 12185 / C2A).